The following is a 390-amino-acid chain: GTPase Obg (390 aa).

The Obg domain maps to 1–159; that stretch reads MKFIDEALIR…RDLQLELMLL (159 aa). The 174-residue stretch at 160 to 333 folds into the OBG-type G domain; sequence ADVGMLGLPN…LCRDIMDFIE (174 aa). Residues 166-173, 191-195, 213-216, 283-286, and 314-316 contribute to the GTP site; these read GLPNAGKS, FTTLV, DIPG, NKID, and SAV. 2 residues coordinate Mg(2+): Ser173 and Thr193. The disordered stretch occupies residues 363 to 390; the sequence is DHQFEDEDEDWDDWSEEDEEGVETIYKP. A compositionally biased stretch (acidic residues) spans 366 to 384; it reads FEDEDEDWDDWSEEDEEGV.

Belongs to the TRAFAC class OBG-HflX-like GTPase superfamily. OBG GTPase family. As to quaternary structure, monomer. Requires Mg(2+) as cofactor.

It is found in the cytoplasm. In terms of biological role, an essential GTPase which binds GTP, GDP and possibly (p)ppGpp with moderate affinity, with high nucleotide exchange rates and a fairly low GTP hydrolysis rate. Plays a role in control of the cell cycle, stress response, ribosome biogenesis and in those bacteria that undergo differentiation, in morphogenesis control. This is GTPase Obg from Pasteurella multocida (strain Pm70).